Reading from the N-terminus, the 362-residue chain is Probable tocopherol O-methyltransferase, chloroplastic (362 aa).

Residues 1-55 (MAHAAAATGALAPLHPLLRCTSRHLCASASPRAGLCLHHHRRRRRSSRRTKLAVR) constitute a chloroplast transit peptide. The SAM motif I stretch occupies residues 141-150 (VVDVGCGIGG). Residues 204–212 (GQFDLVWSM) are SAM motif II. Residues 231-240 (VAAPGARIII) are SAM motif III.

The protein belongs to the class I-like SAM-binding methyltransferase superfamily. gTMT family.

It localises to the plastid. Its subcellular location is the chloroplast. It carries out the reaction gamma-tocopherol + S-adenosyl-L-methionine = (+)-alpha-tocopherol + S-adenosyl-L-homocysteine + H(+). The enzyme catalyses delta-tocotrienol + S-adenosyl-L-methionine = beta-tocotrienol + S-adenosyl-L-homocysteine + H(+). The catalysed reaction is gamma-tocotrienol + S-adenosyl-L-methionine = alpha-tocotrienol + S-adenosyl-L-homocysteine + H(+). It catalyses the reaction delta-tocopherol + S-adenosyl-L-methionine = beta-tocopherol + S-adenosyl-L-homocysteine + H(+). The protein operates within cofactor biosynthesis; tocopherol biosynthesis. Involved in the synthesis of tocopherol (vitamin E). Methylates gamma- and delta-tocopherol to form beta- and alpha-tocopherol, respectively. The chain is Probable tocopherol O-methyltransferase, chloroplastic (VTE4) from Oryza sativa subsp. japonica (Rice).